The sequence spans 941 residues: MNQLYSFFKNCNSFGAPPPLYTHVFLGSRPGKFYLSASSDNEFYTLYNSLVEAKTPVCVAEKQDDYVPLLGDVDLKVCIDQENAFLKKTRVLYGEEELRAIVKCFQDTIKKNVVDWRDYHLICVALEKKPYMAGEYLKNGFHLHFPYLYLEKEKVKNVIIPKIKEMVAAFRLGSGKRLFADIDDAPENFIDDVTNKCWLMYGSSKSEDKKPYRISQVYSGNLEPMDLYEAFSIKPFYTKEEEPITVTVDNVKKILPQLLSISSIKKEVLNVKTPMDLKIPTKIYLKQELKDIEGENSETIKRNLKDAKDLLKILNKKRANEYNSWWDIGIILFNIGHGCEDAFTIWDKWSSYSDKYDPDACVQVWNSMHLRNPRFSKIKGMGSLRWYVKQDNLKGYTAWVDKMHGLVLDEKNLVECVTRLEIMTTDTPLARLMLDLYSGEYVFSDAGWYSFNGTIWSPVKVLKDFRVKFEHISTKYKEMRKRIMELIYHKNDDSGRDSEEDSQEEEVSSSQEQLSAKHRAILMAKYRDINRAINKLENFATQNGILKMCEVFFYNEDFSDLLDENPLLIAFKNGVFDFETLTFRKGLQSDYLSKTLNIRYDDTLTDDSEEVLELYNFLSKIFPDEKVRAYFVDQICEVFRGGNRDKIAMFWTGNGNNGKSVTQRLFETMIGKKLAVKLSTSVLTERIQPGQPNPQLTRLRGGIRWGVFDEWGKTEQILSGSLNVLTGGDSLPCRDLFQKGSDSSDFTPMFKLLCICNELPCLKDAVDATWDRIRIIPFESKFVAREKCPETEQEQREKKLFLCDTEITQKDRMESLARALGWYLVKIFKEKEKKRRNGTYQVTIPDKVNDAKLKYQAKCDILAFFMEETYLKTDNQDHKIPFDDMYISFKNWYINSFSGKMVTLNKHEFIEMVRNKYNLTETDKALRGYMWNRNYDDSDDE.

The stretch at 285–323 (LKQELKDIEGENSETIKRNLKDAKDLLKILNKKRANEYN) forms a coiled coil. A disordered region spans residues 492–514 (DDSGRDSEEDSQEEEVSSSQEQL). A compositionally biased stretch (acidic residues) spans 498-507 (SEEDSQEEEV). The 183-residue stretch at 609 to 791 (EEVLELYNFL…FVAREKCPET (183 aa)) folds into the SF3 helicase domain. 653–660 (GNGNNGKS) serves as a coordination point for ATP.

Belongs to the IIV-6 184L family.

The polypeptide is Putative helicase 121R (Invertebrate iridescent virus 3 (IIV-3)).